The chain runs to 469 residues: C4b-binding protein (469 aa).

An N-terminal signal peptide occupies residues 1 to 56 (MCAKQQQTLLPTRAAHGRLHRNRDAVAWPFSTLCRVSGPTLFQMTFTAALWVAVFG). Sushi domains are found at residues 57 to 117 (KCGP…SCAK), 118 to 178 (KHCR…ECVI), 179 to 242 (VKCG…TCEK), 243 to 301 (IICS…TCEF), 302 to 357 (DCDL…QCKA), and 358 to 415 (LCQK…RCEQ). 12 disulfide bridges follow: C58–C103, C88–C115, C120–C160, C146–C176, C181–C223, C209–C240, C245–C287, C273–C299, C303–C343, C329–C355, C359–C400, and C386–C413. N74 carries N-linked (GlcNAc...) asparagine glycosylation. 3 N-linked (GlcNAc...) asparagine glycosylation sites follow: N227, N275, and N292. 2 N-linked (GlcNAc...) asparagine glycosylation sites follow: N366 and N381. An N-linked (GlcNAc...) asparagine glycan is attached at N428.

As to quaternary structure, homoheptamer; not covalently linked. Mouse lacks the beta chain of C4BP.

The protein resides in the secreted. Its function is as follows. Controls the classical pathway of complement activation. It binds as a cofactor to C3b/C4b inactivator (C3bINA), which then hydrolyzes the complement fragment C4b. It also accelerates the degradation of the C4bC2a complex (C3 convertase) by dissociating the complement fragment C2a. Alpha chain binds C4b. It also interacts with serum amyloid P component. In Mus musculus (Mouse), this protein is C4b-binding protein (C4bpa).